The chain runs to 178 residues: Large ribosomal subunit protein uL5 (178 aa).

This sequence belongs to the universal ribosomal protein uL5 family. As to quaternary structure, part of the 50S ribosomal subunit; contacts the 5S rRNA and probably tRNA. Forms a bridge to the 30S subunit in the 70S ribosome.

Its function is as follows. This is one of the proteins that bind and probably mediate the attachment of the 5S RNA into the large ribosomal subunit, where it forms part of the central protuberance. In the 70S ribosome it contacts protein S13 of the 30S subunit (bridge B1b), connecting the 2 subunits; this bridge is implicated in subunit movement. May contact the P site tRNA; the 5S rRNA and some of its associated proteins might help stabilize positioning of ribosome-bound tRNAs. This Archaeoglobus fulgidus (strain ATCC 49558 / DSM 4304 / JCM 9628 / NBRC 100126 / VC-16) protein is Large ribosomal subunit protein uL5.